We begin with the raw amino-acid sequence, 67 residues long: Protein C' (67 aa).

Belongs to the rhabdoviruses C protein family.

Its function is as follows. Seems to stimulates transcription by the viral polymerase. May play a role in viral pathogenesis or transmission by insects vectors. This Vesicular stomatitis Indiana virus (strain 94GUB Central America) (VSIV) protein is Protein C' (P).